The following is a 342-amino-acid chain: Holliday junction branch migration complex subunit RuvB (342 aa).

A large ATPase domain (RuvB-L) region spans residues 1–179 (MTNILSPEKS…FGIPMRLNFY (179 aa)). Residues Ile-18, Arg-19, Gly-60, Lys-63, Thr-64, Thr-65, 126–128 (EDF), Arg-169, Tyr-179, and Arg-216 each bind ATP. Thr-64 lines the Mg(2+) pocket. A small ATPAse domain (RuvB-S) region spans residues 180 to 250 (NTEELKQVLN…ICDFGLKRLT (71 aa)). The head domain (RuvB-H) stretch occupies residues 253-342 (SIGLDSNDYR…NQLNILNENE (90 aa)). Residues Arg-289, Arg-308, and Arg-313 each contribute to the DNA site.

Belongs to the RuvB family. As to quaternary structure, homohexamer. Forms an RuvA(8)-RuvB(12)-Holliday junction (HJ) complex. HJ DNA is sandwiched between 2 RuvA tetramers; dsDNA enters through RuvA and exits via RuvB. An RuvB hexamer assembles on each DNA strand where it exits the tetramer. Each RuvB hexamer is contacted by two RuvA subunits (via domain III) on 2 adjacent RuvB subunits; this complex drives branch migration. In the full resolvosome a probable DNA-RuvA(4)-RuvB(12)-RuvC(2) complex forms which resolves the HJ.

The protein resides in the cytoplasm. It carries out the reaction ATP + H2O = ADP + phosphate + H(+). Its function is as follows. Participates in UV-tolerance of Synechocystis PCC 6803. The RuvA-RuvB-RuvC complex processes Holliday junction (HJ) DNA during genetic recombination and DNA repair, while the RuvA-RuvB complex plays an important role in the rescue of blocked DNA replication forks via replication fork reversal (RFR). RuvA specifically binds to HJ cruciform DNA, conferring on it an open structure. The RuvB hexamer acts as an ATP-dependent pump, pulling dsDNA into and through the RuvAB complex. RuvB forms 2 homohexamers on either side of HJ DNA bound by 1 or 2 RuvA tetramers; 4 subunits per hexamer contact DNA at a time. Coordinated motions by a converter formed by DNA-disengaged RuvB subunits stimulates ATP hydrolysis and nucleotide exchange. Immobilization of the converter enables RuvB to convert the ATP-contained energy into a lever motion, pulling 2 nucleotides of DNA out of the RuvA tetramer per ATP hydrolyzed, thus driving DNA branch migration. The RuvB motors rotate together with the DNA substrate, which together with the progressing nucleotide cycle form the mechanistic basis for DNA recombination by continuous HJ branch migration. Branch migration allows RuvC to scan DNA until it finds its consensus sequence, where it cleaves and resolves cruciform DNA. This is Holliday junction branch migration complex subunit RuvB from Rickettsia prowazekii (strain Madrid E).